A 175-amino-acid polypeptide reads, in one-letter code: MLINHLSKIRTVRHFSNIKPVLSKEVSRRVIVAPASHFKTSSPNVKSNIPIHEYKQLPEDSNYIEKHYKELQVFLNEFLIKKLNKTYADFEGDPDELVFQLEKFIELEVTPRYTNHSAPDGCEERFKSIGDRIVVDRYLDFVKDVRLTLLLNGGHSFIFDVMLQAKEVFDKMQKE.

The N-terminal 38 residues, 1–38, are a transit peptide targeting the mitochondrion; sequence MLINHLSKIRTVRHFSNIKPVLSKEVSRRVIVAPASHF.

The protein resides in the mitochondrion. May be involved in mitochondrial iron or copper homeostatis. This is Protein FMP23, mitochondrial (FMP23) from Saccharomyces cerevisiae (strain ATCC 204508 / S288c) (Baker's yeast).